The primary structure comprises 558 residues: Deleted in azoospermia protein 2 (558 aa).

Residues 1–10 (MSAANPETPN) show a composition bias toward polar residues. A disordered region spans residues 1-27 (MSAANPETPNSTISREASTQSSSAAAS). Residues 11 to 27 (STISREASTQSSSAAAS) are compositionally biased toward low complexity. An RRM domain is found at 40–115 (NTVFVGGIDA…KKLKLGPAIR (76 aa)). DAZ domains are found at residues 167–190 (AYSAYPHSPGQVITGCQLLVYNYQ), 191–214 (EYPTYPDSAFQVTTGYQLPVYNYQ), 215–238 (PFPAYPRSPFQVTAGYQLPVYNYQ), 239–262 (AFPAYPNSPFQVATGYQFPVYNYQ), 263–286 (PFPAYPSSPFQVTAGYQLPVYNYQ), 287–310 (AFPAYPNSPFQVATGYQFPVYNYQ), 311–334 (AFPAYPNSPVQVTTGYQLPVYNYQ), 335–358 (AFPAYPNSPVQVTTGYQLPVYNYQ), 359–382 (AFPAYPSSPFQVTTGYQLPVYNYQ), 383–406 (AFPAYPSSPFQVTTGYQLPVYNYQ), 407–430 (AFPAYPSSPFQVTTGYQLPVYNYQ), 431–454 (AFPAYPSSPFQVTTGYQLPVYNYQ), 455–478 (AFPAYPSSPFQVTTGYQLPVYNYQ), 479–502 (AFPAYPSSPFQVTTGYQLPVYNYQ), and 503–526 (AFPAYPNSAVQVTTGYQFHVYNYQ).

This sequence belongs to the RRM DAZ family. In terms of assembly, forms a heterodimer with BOLL and DAZL. Interacts with PUM2, DAZAP1, DAZAP2, DZIP1 and DZIP3. Testis specific.

Its subcellular location is the cytoplasm. It localises to the nucleus. Its function is as follows. RNA-binding protein that plays an essential role in spermatogenesis. May act by binding to the 3'-UTR of mRNAs and regulating their translation. This is Deleted in azoospermia protein 2 (DAZ2) from Homo sapiens (Human).